We begin with the raw amino-acid sequence, 511 residues long: Coatomer subunit delta (511 aa).

The segment covering 168–177 (QARRDAERQG) has biased composition (basic and acidic residues). The tract at residues 168–188 (QARRDAERQGKKAPGFGGFGS) is disordered. Serine 223 bears the Phosphoserine mark. Lysine 233 and lysine 241 each carry N6-acetyllysine. Residue serine 244 is modified to Phosphoserine. Positions 271-511 (MESVHMKIEE…TFLVDKYEIL (241 aa)) constitute an MHD domain. Residues lysine 309 and lysine 351 each carry the N6-acetyllysine modification. The residue at position 493 (serine 493) is a Phosphoserine.

The protein belongs to the adaptor complexes medium subunit family. Delta-COP subfamily. In terms of assembly, oligomeric complex that consists of at least the alpha, beta, beta', gamma, delta, epsilon and zeta subunits. In terms of tissue distribution, ubiquitously expressed.

The protein localises to the cytoplasm. It localises to the golgi apparatus membrane. It is found in the cytoplasmic vesicle. Its subcellular location is the COPI-coated vesicle membrane. In terms of biological role, component of the coatomer, a cytosolic protein complex that binds to dilysine motifs and reversibly associates with Golgi non-clathrin-coated vesicles, which further mediate biosynthetic protein transport from the ER, via the Golgi up to the trans Golgi network. The coatomer complex is required for budding from Golgi membranes, and is essential for the retrograde Golgi-to-ER transport of dilysine-tagged proteins. In mammals, the coatomer can only be recruited by membranes associated to ADP-ribosylation factors (ARFs), which are small GTP-binding proteins; the complex also influences the Golgi structural integrity, as well as the processing, activity, and endocytic recycling of LDL receptors. This chain is Coatomer subunit delta (ARCN1), found in Homo sapiens (Human).